Consider the following 491-residue polypeptide: Glutamate--tRNA ligase (491 aa).

The 'HIGH' region motif lies at 13–23 (PSPTGFLHIGN). Residues Cys-110, Cys-112, Cys-137, and His-139 each contribute to the Zn(2+) site. Positions 254–258 (KLSKR) match the 'KMSKS' region motif. Residue Lys-257 coordinates ATP.

It belongs to the class-I aminoacyl-tRNA synthetase family. Glutamate--tRNA ligase type 1 subfamily. In terms of assembly, monomer. Zn(2+) is required as a cofactor.

The protein resides in the cytoplasm. It catalyses the reaction tRNA(Glu) + L-glutamate + ATP = L-glutamyl-tRNA(Glu) + AMP + diphosphate. Catalyzes the attachment of glutamate to tRNA(Glu) in a two-step reaction: glutamate is first activated by ATP to form Glu-AMP and then transferred to the acceptor end of tRNA(Glu). This chain is Glutamate--tRNA ligase, found in Listeria monocytogenes serotype 4b (strain F2365).